An 85-amino-acid polypeptide reads, in one-letter code: UPF0386 protein VF_0869 (85 aa).

It belongs to the UPF0386 family.

This Aliivibrio fischeri (strain ATCC 700601 / ES114) (Vibrio fischeri) protein is UPF0386 protein VF_0869.